The primary structure comprises 381 residues: MSDSQVRKGLNGVISDYTSISKVMPESNSLTYRGYAVEDLVENCSFEEVIYLLWFGELPTTEQLRTFNTTGRSYRSLDAGLISLIHSLPNTCHPMDVLRTAVSYMGTFDPDPFTRDADHIRSIGHNLLAQLPMVVAMDIRRRSGEEIIAPDHNKGIASNFLSMVFGNDDGSVANSADDIRDFERSLILYAEHSFNASTFSARVISSTRSDTYSAITGAIGALKGPLHGGANEFVMHTMLDIDDPNNAADWMGKALDRKERIMGFGHRVYKNGDSRVPSMEKSMRSLAARHRGQKWVHMYESMQEVMEARTGIKPNLDFPAGPAYYMLGFPVDFFTPLFVLARVSGWTAHIVEQFENNALIRPLSAYNGVEEREVVPISERT.

Residue His192 participates in substrate binding. Residue His227 is part of the active site. Residue 260–264 (RIMGF) coordinates CoA. Residue His266 is part of the active site. A substrate-binding site is contributed by Arg275. Asp317 is a catalytic residue. The substrate site is built by Arg342 and Arg361.

It belongs to the citrate synthase family. Homodimer.

The enzyme catalyses propanoyl-CoA + oxaloacetate + H2O = (2S,3S)-2-methylcitrate + CoA + H(+). It carries out the reaction oxaloacetate + acetyl-CoA + H2O = citrate + CoA + H(+). Its pathway is carbohydrate metabolism; tricarboxylic acid cycle. Catalyzes the Claisen condensation of propionyl-CoA and oxaloacetate (OAA) to yield 2-methylcitrate (2-MC) and CoA. Also catalyzes the condensation of oxaloacetate with propionyl-CoA but with a lower specificity. This Corynebacterium glutamicum (strain ATCC 13032 / DSM 20300 / JCM 1318 / BCRC 11384 / CCUG 27702 / LMG 3730 / NBRC 12168 / NCIMB 10025 / NRRL B-2784 / 534) protein is 2-methylcitrate synthase 1 (prpC1).